A 1118-amino-acid chain; its full sequence is Protein SUPPRESSOR OF NPR1-1 CONSTITUTIVE 4 (1118 aa).

A signal peptide spans Met-1–Asp-35. Over Ala-36–Arg-751 the chain is Extracellular. The region spanning Pro-51–Val-353 is the GP-PDE 1 domain. N-linked (GlcNAc...) asparagine glycans are attached at residues Asn-106, Asn-195, Asn-251, Asn-260, Asn-318, Asn-335, Asn-362, Asn-422, Asn-433, Asn-497, Asn-557, Asn-573, and Asn-656. The GP-PDE 2 domain occupies Phe-369–Lys-670. A helical transmembrane segment spans residues Ile-752–Cys-772. The Cytoplasmic portion of the chain corresponds to Phe-773–Gly-1118. One can recognise a Protein kinase domain in the interval Lys-805–Leu-1094. Residues Val-811–Val-819 and Lys-833 each bind ATP. Asp-928 serves as the catalytic Proton acceptor.

The protein in the N-terminal section; belongs to the glycerophosphoryl diester phosphodiesterase family. It in the C-terminal section; belongs to the protein kinase superfamily. Ser/Thr protein kinase family. In terms of tissue distribution, expressed in shoots, rosette and cauline leaves, stems, flowers and siliques.

It is found in the cell membrane. It carries out the reaction a sn-glycero-3-phosphodiester + H2O = an alcohol + sn-glycerol 3-phosphate + H(+). It catalyses the reaction L-seryl-[protein] + ATP = O-phospho-L-seryl-[protein] + ADP + H(+). The catalysed reaction is L-threonyl-[protein] + ATP = O-phospho-L-threonyl-[protein] + ADP + H(+). Its function is as follows. Atypical receptor-like kinase involved in disease resistance. This chain is Protein SUPPRESSOR OF NPR1-1 CONSTITUTIVE 4, found in Arabidopsis thaliana (Mouse-ear cress).